The primary structure comprises 128 residues: MIVRTLDECRNSERRVVADNWESVRMLLKDDNMGFSFHITTIYEGTETHIHYQNHLESVFCMSGEGEIEVVGGETYPIKPGTLYILDKHDEHYLRAYKNKEMVMACVFNPPITGAEVHDENGVYPLVD.

The protein belongs to the ectoine synthase family.

The catalysed reaction is (2S)-4-acetamido-2-aminobutanoate = L-ectoine + H2O. It functions in the pathway amine and polyamine biosynthesis; ectoine biosynthesis; L-ectoine from L-aspartate 4-semialdehyde: step 3/3. Functionally, catalyzes the circularization of gamma-N-acetyl-alpha,gamma-diaminobutyric acid (ADABA) to ectoine (1,4,5,6-tetrahydro-2-methyl-4-pyrimidine carboxylic acid), which is an excellent osmoprotectant. The polypeptide is L-ectoine synthase (Vibrio parahaemolyticus serotype O3:K6 (strain RIMD 2210633)).